Reading from the N-terminus, the 318-residue chain is Methionyl-tRNA formyltransferase (318 aa).

114–117 provides a ligand contact to (6S)-5,6,7,8-tetrahydrofolate; that stretch reads SVLP.

It belongs to the Fmt family.

The enzyme catalyses L-methionyl-tRNA(fMet) + (6R)-10-formyltetrahydrofolate = N-formyl-L-methionyl-tRNA(fMet) + (6S)-5,6,7,8-tetrahydrofolate + H(+). In terms of biological role, attaches a formyl group to the free amino group of methionyl-tRNA(fMet). The formyl group appears to play a dual role in the initiator identity of N-formylmethionyl-tRNA by promoting its recognition by IF2 and preventing the misappropriation of this tRNA by the elongation apparatus. This is Methionyl-tRNA formyltransferase from Bdellovibrio bacteriovorus (strain ATCC 15356 / DSM 50701 / NCIMB 9529 / HD100).